The chain runs to 445 residues: Trigger factor (445 aa).

Positions 162 to 247 (GDQITMDAVG…VKAVHTAEPT (86 aa)) constitute a PPIase FKBP-type domain.

The protein belongs to the FKBP-type PPIase family. Tig subfamily.

It is found in the cytoplasm. It catalyses the reaction [protein]-peptidylproline (omega=180) = [protein]-peptidylproline (omega=0). Involved in protein export. Acts as a chaperone by maintaining the newly synthesized protein in an open conformation. Functions as a peptidyl-prolyl cis-trans isomerase. The protein is Trigger factor of Rickettsia bellii (strain OSU 85-389).